The primary structure comprises 330 residues: Autoinducer 2 import system permease protein LsrD (330 aa).

Residues 1–4 (MRIR) are Cytoplasmic-facing. Residues 5-25 (YGWELALAALLVIEIVAFGAI) form a helical membrane-spanning segment. The Periplasmic segment spans residues 26 to 42 (NPRMLDLNMLLFSTSDF). The chain crosses the membrane as a helical span at residues 43-63 (ICIGIVALPLTMVIVSGGIDI). Over 64–67 (SFGS) the chain is Cytoplasmic. 2 consecutive transmembrane segments (helical) span residues 68–88 (TIGLCAIALGVLFQSGVPMPL) and 89–109 (AILLTLLLGALCGLINAGLII). The Cytoplasmic portion of the chain corresponds to 110–115 (YTKVNP). The chain crosses the membrane as a helical span at residues 116 to 136 (LVITLGTLYLFAGSALLLSGM). The Periplasmic segment spans residues 137–159 (AGATGYEGIGGFPMAFTDFANLD). The chain crosses the membrane as a helical span at residues 160–180 (VLGLPVPLIIFLICLLVFWLW). Topologically, residues 181-209 (LHKTHAGRNVFLIGQSPRVALYSAIPVNR) are cytoplasmic. A helical transmembrane segment spans residues 210 to 230 (TLCALYAMTGLASAVAAVLLV). Residues 231-237 (SYFGSAR) are Periplasmic-facing. The next 2 membrane-spanning stretches (helical) occupy residues 238-258 (SDLGASFLMPAITAVVLGGAN) and 259-279 (IYGGSGSIIGTAIAVLLVGYL). The Periplasmic portion of the chain corresponds to 280 to 285 (QQGLQM). A helical membrane pass occupies residues 286 to 306 (AGVPNQVSSALSGALLIVVVV). Topologically, residues 307–330 (GRSVSLHRQQIKEWLARRANNPLP) are cytoplasmic.

The protein belongs to the binding-protein-dependent transport system permease family. AraH/RbsC subfamily. The complex is composed of two ATP-binding proteins (LsrA), two transmembrane proteins (LsrC and LsrD) and a solute-binding protein (LsrB).

The protein resides in the cell inner membrane. Part of the ABC transporter complex LsrABCD involved in autoinducer 2 (AI-2) import. Probably responsible for the translocation of the substrate across the membrane. This is Autoinducer 2 import system permease protein LsrD (lsrD) from Shigella flexneri serotype 5b (strain 8401).